The chain runs to 467 residues: Asparagine--tRNA ligase (467 aa).

This sequence belongs to the class-II aminoacyl-tRNA synthetase family. In terms of assembly, homodimer.

The protein localises to the cytoplasm. The catalysed reaction is tRNA(Asn) + L-asparagine + ATP = L-asparaginyl-tRNA(Asn) + AMP + diphosphate + H(+). In Glaesserella parasuis serovar 5 (strain SH0165) (Haemophilus parasuis), this protein is Asparagine--tRNA ligase.